Consider the following 231-residue polypeptide: Killer cell lectin-like receptor subfamily F member 1 (231 aa).

Over Met1–Lys38 the chain is Cytoplasmic. Tyr7 carries the post-translational modification Phosphotyrosine. Residues Ile39–Ile59 form a helical; Signal-anchor for type II membrane protein membrane-spanning segment. Topologically, residues Leu60 to Tyr231 are extracellular. N-linked (GlcNAc...) asparagine glycosylation is found at Asn77, Asn91, Asn96, and Asn176. One can recognise a C-type lectin domain in the interval Tyr121 to Gln230. 2 disulfides stabilise this stretch: Cys142-Cys229 and Cys208-Cys221.

Homodimer. Interacts with CLEC2B. Phosphorylated on Tyr-7; this phosphorylation is required for NKp80/KLRF1-mediated cytotoxicity.

It is found in the membrane. Functionally, functions as an activating receptor involved in immunosurveillance upon binding to various ligands displayed at the surface of myeloid cells. Upon interaction with CLEC2B ligand, stimulates NK-cell cytotoxicity and cytokine production leading to the cytolysis of malignant CLEC2B-expressing myeloid cells. Actviation of the common cytotoxicity pathway involves SRC and SYK kinases. The polypeptide is Killer cell lectin-like receptor subfamily F member 1 (KLRF1) (Macaca fascicularis (Crab-eating macaque)).